A 407-amino-acid chain; its full sequence is Peptidase T (407 aa).

Residue H78 coordinates Zn(2+). The active site involves D80. Residue D141 participates in Zn(2+) binding. E175 (proton acceptor) is an active-site residue. The Zn(2+) site is built by E176, D198, and H380.

Belongs to the peptidase M20B family. It depends on Zn(2+) as a cofactor.

The protein localises to the cytoplasm. The enzyme catalyses Release of the N-terminal residue from a tripeptide.. Functionally, cleaves the N-terminal amino acid of tripeptides. This chain is Peptidase T, found in Clostridium novyi (strain NT).